Here is a 494-residue protein sequence, read N- to C-terminus: Guanosine-5'-triphosphate,3'-diphosphate pyrophosphatase (494 aa).

It belongs to the GppA/Ppx family. GppA subfamily.

The catalysed reaction is guanosine 3'-diphosphate 5'-triphosphate + H2O = guanosine 3',5'-bis(diphosphate) + phosphate + H(+). It participates in purine metabolism; ppGpp biosynthesis; ppGpp from GTP: step 2/2. Catalyzes the conversion of pppGpp to ppGpp. Guanosine pentaphosphate (pppGpp) is a cytoplasmic signaling molecule which together with ppGpp controls the 'stringent response', an adaptive process that allows bacteria to respond to amino acid starvation, resulting in the coordinated regulation of numerous cellular activities. This is Guanosine-5'-triphosphate,3'-diphosphate pyrophosphatase from Escherichia fergusonii (strain ATCC 35469 / DSM 13698 / CCUG 18766 / IAM 14443 / JCM 21226 / LMG 7866 / NBRC 102419 / NCTC 12128 / CDC 0568-73).